Reading from the N-terminus, the 246-residue chain is Large ribosomal subunit protein uL30 (246 aa).

M1 carries the post-translational modification N-acetylmethionine. 4 repeat units span residues 7–17, 18–28, 29–40, and 41–52. Residues 7-52 form a 4 X 12 AA tandem repeats region; it reads KKVPSVPESLLKRRQAYAAAKAKRLKRLLAQKKFRKAQRKIIYERA.

This sequence belongs to the universal ribosomal protein uL30 family. In terms of assembly, component of the large ribosomal subunit.

The protein localises to the cytoplasm. Component of the large ribosomal subunit. The ribosome is a large ribonucleoprotein complex responsible for the synthesis of proteins in the cell. Binds to G-rich structures in 28S rRNA and in mRNAs. Plays a regulatory role in the translation apparatus; inhibits cell-free translation of mRNAs. The sequence is that of Large ribosomal subunit protein uL30 (RPL7) from Gallus gallus (Chicken).